A 388-amino-acid chain; its full sequence is Glucose-1-phosphate adenylyltransferase (388 aa).

Alpha-D-glucose 1-phosphate is bound by residues Tyr-100, Gly-165, 180–181 (EK), and Ser-191.

The protein belongs to the bacterial/plant glucose-1-phosphate adenylyltransferase family. As to quaternary structure, homotetramer.

The catalysed reaction is alpha-D-glucose 1-phosphate + ATP + H(+) = ADP-alpha-D-glucose + diphosphate. Its pathway is glycan biosynthesis; glycogen biosynthesis. Its function is as follows. Involved in the biosynthesis of ADP-glucose, a building block required for the elongation reactions to produce glycogen. Catalyzes the reaction between ATP and alpha-D-glucose 1-phosphate (G1P) to produce pyrophosphate and ADP-Glc. The polypeptide is Glucose-1-phosphate adenylyltransferase (Clostridium perfringens (strain SM101 / Type A)).